The following is a 154-amino-acid chain: Large ribosomal subunit protein uL13 (154 aa).

This sequence belongs to the universal ribosomal protein uL13 family. In terms of assembly, part of the 50S ribosomal subunit.

In terms of biological role, this protein is one of the early assembly proteins of the 50S ribosomal subunit, although it is not seen to bind rRNA by itself. It is important during the early stages of 50S assembly. This Rhodopseudomonas palustris (strain BisB5) protein is Large ribosomal subunit protein uL13.